A 90-amino-acid chain; its full sequence is Small ribosomal subunit protein bS16 (90 aa).

Belongs to the bacterial ribosomal protein bS16 family.

The chain is Small ribosomal subunit protein bS16 from Fervidobacterium nodosum (strain ATCC 35602 / DSM 5306 / Rt17-B1).